We begin with the raw amino-acid sequence, 257 residues long: Imidazole glycerol phosphate synthase subunit HisF (257 aa).

Active-site residues include aspartate 12 and aspartate 131.

Belongs to the HisA/HisF family. In terms of assembly, heterodimer of HisH and HisF.

The protein localises to the cytoplasm. It carries out the reaction 5-[(5-phospho-1-deoxy-D-ribulos-1-ylimino)methylamino]-1-(5-phospho-beta-D-ribosyl)imidazole-4-carboxamide + L-glutamine = D-erythro-1-(imidazol-4-yl)glycerol 3-phosphate + 5-amino-1-(5-phospho-beta-D-ribosyl)imidazole-4-carboxamide + L-glutamate + H(+). It functions in the pathway amino-acid biosynthesis; L-histidine biosynthesis; L-histidine from 5-phospho-alpha-D-ribose 1-diphosphate: step 5/9. Functionally, IGPS catalyzes the conversion of PRFAR and glutamine to IGP, AICAR and glutamate. The HisF subunit catalyzes the cyclization activity that produces IGP and AICAR from PRFAR using the ammonia provided by the HisH subunit. The sequence is that of Imidazole glycerol phosphate synthase subunit HisF from Rhodococcus erythropolis (strain PR4 / NBRC 100887).